The primary structure comprises 102 residues: Putative septation protein SpoVG 1 (102 aa).

Belongs to the SpoVG family.

In terms of biological role, could be involved in septation. In Listeria monocytogenes serotype 4b (strain F2365), this protein is Putative septation protein SpoVG 1.